A 512-amino-acid polypeptide reads, in one-letter code: Cytochrome P450 monooxygenase paxQ (512 aa).

2 helical membrane-spanning segments follow: residues 3-23 and 35-55; these read FVLS…LVSI and LQIP…ISAL. Position 453 (Cys-453) interacts with heme.

It belongs to the cytochrome P450 family. Heme serves as cofactor.

It is found in the membrane. It participates in secondary metabolite biosynthesis. Its function is as follows. Cytochrome P450 monooxygenase; part of the gene cluster that mediates the biosynthesis of paxilline, a mycotoxin that acts as an inhibitor of mammalian maxi-K channels. PaxG, the geranylgeranyl diphosphate (GGPP) synthase is proposed to catalyze the first step in paxilline biosynthesis. Condensation of indole-3-glycerol phosphate with GGPP by paxC then forms 3-geranylgeranylindole (3-GGI), followed by epoxidation and cyclization of this intermediate (by paxM and paxB) to form paspaline. Paspaline is subsequently converted to 13-desoxypaxilline by paxP, the latter being then converted to paxilline by paxQ. Finally paxilline can be mono- and di-prenylated by paxD. PaxQ can also utilized beta-paxitriol and alpha-PC-M6 as substrates converting them to alpha-paxitriol. This chain is Cytochrome P450 monooxygenase paxQ, found in Penicillium paxilli.